The sequence spans 179 residues: Ubiquitin-conjugating enzyme E2 C (179 aa).

Ala-2 carries the N-acetylalanine modification. A Phosphoserine modification is found at Ser-3. The UBC core domain occupies 30-175 (PVGKRLQQEL…LQETYSKQVS (146 aa)). The active-site Glycyl thioester intermediate is Cys-114.

It belongs to the ubiquitin-conjugating enzyme family. Component of the APC/C complex, composed of at least 14 distinct subunits that assemble into a complex of at least 19 chains with a combined molecular mass of around 1.2 MDa. Within this complex, directly interacts with ANAPC2. In terms of processing, autoubiquitinated by the APC/C complex, leading to its degradation by the proteasome. Its degradation plays a central role in APC/C regulation, allowing cyclin-A accumulation before S phase entry. APC/C substrates inhibit the autoubiquitination of UBE2C/UBCH10 but not its E2 function, hence APC/C remaining active until its substrates have been destroyed.

The enzyme catalyses S-ubiquitinyl-[E1 ubiquitin-activating enzyme]-L-cysteine + [E2 ubiquitin-conjugating enzyme]-L-cysteine = [E1 ubiquitin-activating enzyme]-L-cysteine + S-ubiquitinyl-[E2 ubiquitin-conjugating enzyme]-L-cysteine.. The catalysed reaction is S-ubiquitinyl-[E1 ubiquitin-activating enzyme]-L-cysteine + [acceptor protein]-L-lysine = [E1 ubiquitin-activating enzyme]-L-cysteine + N(6)-monoubiquitinyl-[acceptor protein]-L-lysine.. Its pathway is protein modification; protein ubiquitination. In terms of biological role, accepts ubiquitin from the E1 complex and catalyzes its covalent attachment to other proteins. In vitro catalyzes 'Lys-11'- and 'Lys-48'-linked polyubiquitination. Acts as an essential factor of the anaphase promoting complex/cyclosome (APC/C), a cell cycle-regulated ubiquitin ligase that controls progression through mitosis. Acts by initiating 'Lys-11'-linked polyubiquitin chains on APC/C substrates, leading to the degradation of APC/C substrates by the proteasome and promoting mitotic exit. The sequence is that of Ubiquitin-conjugating enzyme E2 C (Ube2c) from Mus musculus (Mouse).